The following is a 353-amino-acid chain: Protein pelota homolog (353 aa).

Belongs to the eukaryotic release factor 1 family. Pelota subfamily. As to quaternary structure, monomer. A divalent metal cation is required as a cofactor.

It is found in the cytoplasm. Its function is as follows. May function in recognizing stalled ribosomes, interact with stem-loop structures in stalled mRNA molecules, and effect endonucleolytic cleavage of the mRNA. May play a role in the release non-functional ribosomes and degradation of damaged mRNAs. Has endoribonuclease activity. This Methanopyrus kandleri (strain AV19 / DSM 6324 / JCM 9639 / NBRC 100938) protein is Protein pelota homolog.